Consider the following 555-residue polypeptide: 2-succinyl-5-enolpyruvyl-6-hydroxy-3-cyclohexene-1-carboxylate synthase (555 aa).

The protein belongs to the TPP enzyme family. MenD subfamily. In terms of assembly, homodimer. The cofactor is Mg(2+). It depends on Mn(2+) as a cofactor. Thiamine diphosphate serves as cofactor.

It catalyses the reaction isochorismate + 2-oxoglutarate + H(+) = 5-enolpyruvoyl-6-hydroxy-2-succinyl-cyclohex-3-ene-1-carboxylate + CO2. The protein operates within quinol/quinone metabolism; 1,4-dihydroxy-2-naphthoate biosynthesis; 1,4-dihydroxy-2-naphthoate from chorismate: step 2/7. It functions in the pathway quinol/quinone metabolism; menaquinone biosynthesis. Functionally, catalyzes the thiamine diphosphate-dependent decarboxylation of 2-oxoglutarate and the subsequent addition of the resulting succinic semialdehyde-thiamine pyrophosphate anion to isochorismate to yield 2-succinyl-5-enolpyruvyl-6-hydroxy-3-cyclohexene-1-carboxylate (SEPHCHC). This is 2-succinyl-5-enolpyruvyl-6-hydroxy-3-cyclohexene-1-carboxylate synthase from Kineococcus radiotolerans (strain ATCC BAA-149 / DSM 14245 / SRS30216).